The sequence spans 134 residues: Small ribosomal subunit protein bS6 (134 aa).

The disordered stretch occupies residues 100-134; the sequence is SFLARDETDRRERSEETAEGEGEPDHSANEAVVTA. Basic and acidic residues predominate over residues 103 to 115; the sequence is ARDETDRRERSEE.

This sequence belongs to the bacterial ribosomal protein bS6 family.

In terms of biological role, binds together with bS18 to 16S ribosomal RNA. The polypeptide is Small ribosomal subunit protein bS6 (Acidithiobacillus ferrooxidans (strain ATCC 23270 / DSM 14882 / CIP 104768 / NCIMB 8455) (Ferrobacillus ferrooxidans (strain ATCC 23270))).